We begin with the raw amino-acid sequence, 141 residues long: Large ribosomal subunit protein uL16 (141 aa).

Residues 1-17 (MLMPKRTKFRKQMKGRN) show a composition bias toward basic residues. The tract at residues 1–22 (MLMPKRTKFRKQMKGRNRGYAT) is disordered.

The protein belongs to the universal ribosomal protein uL16 family. As to quaternary structure, part of the 50S ribosomal subunit.

Functionally, binds 23S rRNA and is also seen to make contacts with the A and possibly P site tRNAs. The chain is Large ribosomal subunit protein uL16 from Campylobacter curvus (strain 525.92).